The sequence spans 2359 residues: Pre-mRNA-processing-splicing factor 8A (2359 aa).

The interval 1 to 54 is disordered; the sequence is MWNNNDGMPLAPPGTGGSMMPPPPAAHPSYTALPPPSNPTPPVEPTPEEAEAKL. Residues 33 to 45 are compositionally biased toward pro residues; that stretch reads LPPPSNPTPPVEP. Positions 2127–2258 constitute an MPN domain; that stretch reads TYIMPKNILK…LTSYKLTQTG (132 aa).

Interacts with CLO.

Its subcellular location is the nucleus. Its function is as follows. Functions as a scaffold that mediates the ordered assembly of spliceosomal proteins and snRNAs. Required for the assembly of the U4/U6-U5 tri-snRNP complex. Required for embryo development. Required for splicing efficiency of COOLAIR introns and usage of the proximal poly(A) site. COOLAIR is a set of long non-coding antisense transcripts produced at the FLOWERING LOCUS C (FLC). COOLAIR initiates just downstream of the major sense transcript poly(A) site and terminates either early or extends into the FLC promoter region. Splicing of COOLAIR by PRP8A is functionally important for FLC regulation. This chain is Pre-mRNA-processing-splicing factor 8A, found in Arabidopsis thaliana (Mouse-ear cress).